We begin with the raw amino-acid sequence, 302 residues long: Ribosomal RNA small subunit methyltransferase A (302 aa).

Residues histidine 15, leucine 17, glycine 42, glutamate 64, aspartate 89, and asparagine 109 each contribute to the S-adenosyl-L-methionine site. A disordered region spans residues 275 to 302 (DAASADGHDHGDGSGQGESSPGGARDQI).

The protein belongs to the class I-like SAM-binding methyltransferase superfamily. rRNA adenine N(6)-methyltransferase family. RsmA subfamily.

The protein resides in the cytoplasm. It catalyses the reaction adenosine(1518)/adenosine(1519) in 16S rRNA + 4 S-adenosyl-L-methionine = N(6)-dimethyladenosine(1518)/N(6)-dimethyladenosine(1519) in 16S rRNA + 4 S-adenosyl-L-homocysteine + 4 H(+). In terms of biological role, specifically dimethylates two adjacent adenosines (A1518 and A1519) in the loop of a conserved hairpin near the 3'-end of 16S rRNA in the 30S particle. May play a critical role in biogenesis of 30S subunits. This chain is Ribosomal RNA small subunit methyltransferase A, found in Parasynechococcus marenigrum (strain WH8102).